The sequence spans 543 residues: CTP synthase (543 aa).

The interval 1–265 (MARFIFITGG…DSEVLRAFGI (265 aa)) is amidoligase domain. CTP is bound at residue S13. Position 13 (S13) interacts with UTP. 14 to 19 (SLGKGL) contacts ATP. Y54 is a binding site for L-glutamine. Position 71 (D71) interacts with ATP. 2 residues coordinate Mg(2+): D71 and E139. Residues 146-148 (DIE), 186-191 (KTKPTQ), and K222 each bind CTP. UTP-binding positions include 186–191 (KTKPTQ) and K222. Residues 291–542 (TIGVVGKYVS…IEAAVKQSRL (252 aa)) enclose the Glutamine amidotransferase type-1 domain. G354 is an L-glutamine binding site. C381 acts as the Nucleophile; for glutamine hydrolysis in catalysis. Residues 382-385 (LGMQ), E405, and R470 each bind L-glutamine. Active-site residues include H515 and E517.

Belongs to the CTP synthase family. In terms of assembly, homotetramer.

It catalyses the reaction UTP + L-glutamine + ATP + H2O = CTP + L-glutamate + ADP + phosphate + 2 H(+). It carries out the reaction L-glutamine + H2O = L-glutamate + NH4(+). The catalysed reaction is UTP + NH4(+) + ATP = CTP + ADP + phosphate + 2 H(+). It functions in the pathway pyrimidine metabolism; CTP biosynthesis via de novo pathway; CTP from UDP: step 2/2. Allosterically activated by GTP, when glutamine is the substrate; GTP has no effect on the reaction when ammonia is the substrate. The allosteric effector GTP functions by stabilizing the protein conformation that binds the tetrahedral intermediate(s) formed during glutamine hydrolysis. Inhibited by the product CTP, via allosteric rather than competitive inhibition. Catalyzes the ATP-dependent amination of UTP to CTP with either L-glutamine or ammonia as the source of nitrogen. Regulates intracellular CTP levels through interactions with the four ribonucleotide triphosphates. The protein is CTP synthase of Sphingopyxis alaskensis (strain DSM 13593 / LMG 18877 / RB2256) (Sphingomonas alaskensis).